The primary structure comprises 757 residues: MGRRARGRRFQQPPQPEGEEDASDGGRKRGQAGWEGGYPEIVKENKLFEHYYQELKIVPEGEWDQFMESLREPLPATLRITGYKSHAKEILHCLKNKYFKELEDLEVDGQKVEVPQPLSWYPEELAWHTNLSRKILRKSPLLAKFHQFLVSETESGNISRQEAVSMIPPLLLNVEPHHKILDMCAAPGSKTTQLIEMLHADMSVPFPEGFVIANDVDNKRCYLLVHQAKRLSSPCIMVVNHDASSIPRLTVDVDGRKEILFYDRILCDVPCSGDGTMRKNIDVWKKWTTLNSLQLHGLQLRIATRGAEQLAEGGRMVYSTCSLNPVEDEAVIAALLEKSEGALELADVSAELPGLKWMPGVSQWKVMTRDGQWFADWHEVPQGRHTQIRPTMFPPTDLEKLQAMHLERCLRILPHHQNTGGFFVAVLVKKAPMPWNKRQPKVQNKSAEAREPRVSSHVAATEGNPSDQSELESQMITGAGDSETAHNTENTESNEKKDGVCGPPPSKKMKLFGFKEDPFVFIPEDDPLFPPIEKFYALDPSFPRMNLLTRTTEGKKRQLYMVSKELRNVLLNNSEKMKVINTGIKVWCRNNSGEEFDCAFRLAQEGIYTLYPFINSRIITVSMEDVKTLLTQENPFFRKLSSEAYSQVKDLAKGSVVLKYEPDSANPDTLQCPIVLCGWRGKASIRTFVPKNERLHYLRMMGLEVLGEKKKEGVILTNENAASPEQPGDEDAKQTAQDPCVPDSVPGCDAAAAEPSR.

The interval 1–35 (MGRRARGRRFQQPPQPEGEEDASDGGRKRGQAGWE) is disordered. Position 23 is a phosphoserine (S23). K46 participates in a covalent cross-link: Glycyl lysine isopeptide (Lys-Gly) (interchain with G-Cter in SUMO2). S139 is subject to Phosphoserine; by AURKB. S-adenosyl-L-methionine is bound by residues 184–190 (CAAPGSK), D215, D242, and D268. C321 acts as the Nucleophile in catalysis. Positions 436-504 (NKRQPKVQNK…EKKDGVCGPP (69 aa)) are disordered. Phosphoserine occurs at positions 456 and 473. Polar residues predominate over residues 463 to 476 (GNPSDQSELESQMI). Residues K510 and K515 each participate in a glycyl lysine isopeptide (Lys-Gly) (interchain with G-Cter in SUMO2) cross-link. K585 is modified (N6-acetyllysine; alternate). Residue K585 is modified to N6-malonyllysine; alternate. Residue K585 forms a Glycyl lysine isopeptide (Lys-Gly) (interchain with G-Cter in SUMO2); alternate linkage. Position 592 is a phosphoserine (S592). Glycyl lysine isopeptide (Lys-Gly) (interchain with G-Cter in SUMO2) cross-links involve residues K639, K653, and K659. A disordered region spans residues 716–757 (LTNENAASPEQPGDEDAKQTAQDPCVPDSVPGCDAAAAEPSR). Phosphothreonine is present on T717. A Phosphoserine modification is found at S723.

Belongs to the class I-like SAM-binding methyltransferase superfamily. RsmB/NOP family. TRM4 subfamily. As to quaternary structure, interacts with NPM1 and NCL during interphase; interaction is disrupted following phosphorylation at Ser-139. Phosphorylated at Ser-139 by AURKB during mitosis, leading to abolish methyltransferase activity and the interaction with NPM1. Ubiquitously expressed at low level. Up-regulated in tumors. Dynamically expressed during morphogenesis and in adult skin: in adult skin, expression is up-regulated in the bulge and hair germ as soon as the hair follicle enters its growing phase (anagen). During anagen, expressed at highest level in cells of the hair germ that give rise to the hair matrix.

The protein resides in the nucleus. Its subcellular location is the nucleolus. It localises to the cytoplasm. The protein localises to the mitochondrion. It is found in the cytoskeleton. The protein resides in the spindle. Its subcellular location is the secreted. It localises to the extracellular exosome. It carries out the reaction cytidine(48) in tRNA + S-adenosyl-L-methionine = 5-methylcytidine(48) in tRNA + S-adenosyl-L-homocysteine + H(+). The catalysed reaction is cytidine(49) in tRNA + S-adenosyl-L-methionine = 5-methylcytidine(49) in tRNA + S-adenosyl-L-homocysteine + H(+). The enzyme catalyses cytidine(50) in tRNA + S-adenosyl-L-methionine = 5-methylcytidine(50) in tRNA + S-adenosyl-L-homocysteine + H(+). It catalyses the reaction cytidine(34) in tRNA precursor + S-adenosyl-L-methionine = 5-methylcytidine(34) in tRNA precursor + S-adenosyl-L-homocysteine + H(+). It carries out the reaction a cytidine in mRNA + S-adenosyl-L-methionine = a 5-methylcytidine in mRNA + S-adenosyl-L-homocysteine + H(+). Inhibited by magnesium ions. Its function is as follows. RNA cytosine C(5)-methyltransferase that methylates cytosine to 5-methylcytosine (m5C) in various RNAs, such as tRNAs, mRNAs and some long non-coding RNAs (lncRNAs). Involved in various processes, such as epidermal stem cell differentiation, testis differentiation and maternal to zygotic transition during early development: acts by increasing protein synthesis; cytosine C(5)-methylation promoting tRNA stability and preventing mRNA decay. Methylates cytosine to 5-methylcytosine (m5C) at positions 34 and 48 of intron-containing tRNA(Leu)(CAA) precursors, and at positions 48, 49 and 50 of tRNA(Gly)(GCC) precursors. tRNA methylation is required generation of RNA fragments derived from tRNAs (tRFs). Also mediates C(5)-methylation of mitochondrial tRNAs. Catalyzes cytosine C(5)-methylation of mRNAs, leading to stabilize them and prevent mRNA decay: mRNA stabilization involves YBX1 that specifically recognizes and binds m5C-modified transcripts. Cytosine C(5)-methylation of mRNAs also regulates mRNA export: methylated transcripts are specifically recognized by THOC4/ALYREF, which mediates mRNA nucleo-cytoplasmic shuttling. Also mediates cytosine C(5)-methylation of non-coding RNAs, such as vault RNAs (vtRNAs), promoting their processing into regulatory small RNAs. Cytosine C(5)-methylation of vtRNA VTRNA1.1 promotes its processing into small-vault RNA4 (svRNA4) and regulates epidermal differentiation. May act downstream of Myc to regulate epidermal cell growth and proliferation. Required for proper spindle assembly and chromosome segregation, independently of its methyltransferase activity. The polypeptide is RNA cytosine C(5)-methyltransferase NSUN2 (Mus musculus (Mouse)).